We begin with the raw amino-acid sequence, 143 residues long: MPEPARPATASVPVEGTLLAFDYGEKRIGVALGNTVSRSARALETIPNRSVDFRFAQISRLVGEWQPVGFVVGMPVHPDGEEQPMIKLAKRFGNQLLGRYGLPVTWVDERYSSIAAQDAGASDDVLDAEAARIILQQFFDEHA.

Belongs to the YqgF nuclease family.

It is found in the cytoplasm. In terms of biological role, could be a nuclease involved in processing of the 5'-end of pre-16S rRNA. The protein is Putative pre-16S rRNA nuclease of Ralstonia pickettii (strain 12J).